The sequence spans 351 residues: Molybdenum import ATP-binding protein ModC (351 aa).

Residues Met-1 to Ser-229 enclose the ABC transporter domain. Gly-31–Thr-38 contacts ATP. The Mop domain maps to Gln-289–Met-351.

It belongs to the ABC transporter superfamily. Molybdate importer (TC 3.A.1.8) family. As to quaternary structure, the complex is composed of two ATP-binding proteins (ModC), two transmembrane proteins (ModB) and a solute-binding protein (ModA).

The protein localises to the cell inner membrane. It catalyses the reaction molybdate(out) + ATP + H2O = molybdate(in) + ADP + phosphate + H(+). Part of the ABC transporter complex ModABC involved in molybdenum import. Responsible for energy coupling to the transport system. This Haemophilus influenzae (strain ATCC 51907 / DSM 11121 / KW20 / Rd) protein is Molybdenum import ATP-binding protein ModC.